The sequence spans 255 residues: Probable ubiquitin carboxyl-terminal hydrolase (255 aa).

Positions 13 to 237 constitute a UCH catalytic domain; that stretch reads NWIPLEANPE…IRFNLMGLVK (225 aa). An interaction with ubiquitin region spans residues 16-21; the sequence is PLEANP. Residue cysteine 103 is the Nucleophile of the active site. Residue histidine 177 is the Proton donor of the active site. Residues 227–232 form an interaction with ubiquitin region; it reads EIRFNL. Residues 235-255 form a disordered region; sequence LVKKPNEESEEEEEKEKEETK. Positions 242–255 are enriched in acidic residues; the sequence is ESEEEEEKEKEETK.

Belongs to the peptidase C12 family.

The protein localises to the cytoplasm. It catalyses the reaction Thiol-dependent hydrolysis of ester, thioester, amide, peptide and isopeptide bonds formed by the C-terminal Gly of ubiquitin (a 76-residue protein attached to proteins as an intracellular targeting signal).. In terms of biological role, ubiquitin-protein hydrolase is involved both in the processing of ubiquitin precursors and of ubiquitinated proteins. This enzyme is a thiol protease that recognizes and hydrolyzes a peptide bond at the C-terminal glycine of either ubiquitin or nedd8. The sequence is that of Probable ubiquitin carboxyl-terminal hydrolase (uch1) from Dictyostelium discoideum (Social amoeba).